The primary structure comprises 502 residues: Peroxisomal catalase (502 aa).

Residues histidine 64 and asparagine 137 contribute to the active site. Position 347 (tyrosine 347) interacts with heme. Residues 500–502 carry the Microbody targeting signal motif; the sequence is AKM.

It belongs to the catalase family. Heme serves as cofactor.

It is found in the peroxisome matrix. The catalysed reaction is 2 H2O2 = O2 + 2 H2O. Functionally, catalyzes the degradation of hydrogen peroxide (H(2)O(2)) generated by peroxisomal oxidases to water and oxygen, thereby protecting cells from the toxic effects of hydrogen peroxide. The protein is Peroxisomal catalase of Toxoplasma gondii.